Here is a 619-residue protein sequence, read N- to C-terminus: CLPTM1-like membrane protein cnrB (619 aa).

Residues 1–21 (MNNQGGAVAANGQRPQAQQQQ) are disordered. The segment covering 9–21 (AANGQRPQAQQQQ) has biased composition (low complexity). A run of 6 helical transmembrane segments spans residues 26 to 46 (IMGIISTLIRFMAIYYIASFA), 324 to 344 (WILGLTLIVSVLHTIFEFLAF), 360 to 380 (LSVKTITLNCVCMGIIFLYLL), 384 to 404 (TSYMILASSGFGFLVEFWKLG), 445 to 465 (YLSWLLFPLVIGTSIYSLYYH), and 474 to 496 (VVSSLVRTVYTFEFIMMTPQLFI). The disordered stretch occupies residues 566–619 (SEEAEEVQQQDKKEIKEKVEEREEEKQEEEEEEKEKEEESTSSSKVTKRKTKKV). Over residues 574 to 590 (QQDKKEIKEKVEEREEE) the composition is skewed to basic and acidic residues. Over residues 591–605 (KQEEEEEEKEKEEES) the composition is skewed to acidic residues.

This sequence belongs to the CLPTM1 family.

It is found in the membrane. The chain is CLPTM1-like membrane protein cnrB (cnrB) from Dictyostelium discoideum (Social amoeba).